Consider the following 1941-residue polypeptide: Myosin light chain kinase, smooth muscle (1941 aa).

Ig-like C2-type domains lie at 33–122 (PAFI…VELT) and 156–244 (PKFA…AELS). Residues Cys177 and Cys228 are joined by a disulfide bond. Tyr226 carries the phosphotyrosine; by ABL1 modification. Residues 255-329 (AVRGTKAPSP…RKVPQSSILQ (75 aa)) are disordered. Polar residues predominate over residues 286–305 (NCPSPQRSGSSARATNSHLK). Phosphoserine is present on Ser295. The span at 306–320 (SPQEPKPKLCEDAPR) shows a compositional bias: basic and acidic residues. Ser333 and Ser355 each carry phosphoserine. Ig-like C2-type domains are found at residues 402 to 485 (PRFE…GQVS), 502 to 587 (PSFS…ATVT), 611 to 699 (PIFL…AVLT), and 709 to 809 (PWFI…APPR). Intrachain disulfides connect Cys423/Cys475 and Cys523/Cys571. A Phosphotyrosine; by ABL1 and SRC modification is found at Tyr452. A disulfide bridge connects residues Cys730 and Cys793. Phosphotyrosine; by ABL1 is present on Tyr780. 4 repeat units span residues 856-883 (DVRGLLKRRVETRLHTEEAIRQQEVGQL), 884-911 (DFRDLLGKKVSTKTVSEDDLKDIPAEQM), 912-939 (DFRANLQRQVKPKTISEEERKVHSPQQV), and 940-966 (DFRSVLAKKGTPKTPVPEKAPPKAATP). The tract at residues 856–985 (DVRGLLKRRV…KKSPSENGGN (130 aa)) is 5 X 28 AA approximate tandem repeats. An actin-binding (calcium/calmodulin-sensitive) region spans residues 911–951 (MDFRANLQRQVKPKTISEEERKVHSPQQVDFRSVLAKKGTP). The tract at residues 920–1120 (QVKPKTISEE…KRPESQGSAP (201 aa)) is disordered. Ser935 is modified (phosphoserine). Positions 936-951 (PQQVDFRSVLAKKGTP) are calmodulin-binding. Residues 967 to 985 (DFRSVLGGKKKSPSENGGN) form a 1-5; truncated repeat. 5 repeat units span residues 990–1002 (LNVKAGESPTPAG), 1003–1014 (DAQAIGALKPVG), 1015–1026 (NAKPAETPKPIG), 1027–1038 (NAKPTETLKPVG), and 1039–1049 (NTKPAETLKPI). The tract at residues 990-1049 (LNVKAGESPTPAGDAQAIGALKPVGNAKPAETPKPIGNAKPTETLKPVGNTKPAETLKPI) is 5 X 12 AA approximate tandem repeats. The segment at 1048-1482 (PIANAQPSGS…TVTVNTEQKV (435 aa)) is actin-binding (calcium/calmodulin-insensitive). Residues 1052–1065 (AQPSGSLKPVTNAQ) show a composition bias toward polar residues. Over residues 1085–1099 (AGKEEVKEVKNDVNC) the composition is skewed to basic and acidic residues. The Ig-like C2-type 7 domain occupies 1120 to 1208 (PVFKEKLQDV…GQAECSCQVT (89 aa)). Cys1141 and Cys1192 are disulfide-bonded. A disordered region spans residues 1212-1257 (AQTSENTKAPEMKSRRPKSSLPPVLGTESDATVKKKPAPKTPTKAA). The 89-residue stretch at 1260–1348 (PQIIQFPEDQ…GSRQAQVNLT (89 aa)) folds into the Ig-like C2-type 8 domain. A Fibronectin type-III domain is found at 1356-1449 (PAGTPCASDI…ESELTAVGEK (94 aa)). The tract at residues 1435 to 1469 (SEPSQESELTAVGEKPEEPKDEVEVSDDDEKEPEV) is disordered. Positions 1453-1467 (PKDEVEVSDDDEKEP) are enriched in acidic residues. Ser1460 is subject to Phosphoserine. Tyr1471 bears the Phosphotyrosine; by ABL1 mark. In terms of domain architecture, Protein kinase spans 1486–1741 (YDIEERLGSG…CTQCLQHPWL (256 aa)). Residues 1492-1500 (LGSGKFGQV) and Lys1515 each bind ATP. Tyr1597 is modified (phosphotyrosine; by ABL1). The active-site Proton acceptor is Asp1607. Phosphotyrosine; by ABL1 is present on Tyr1657. The calmodulin-binding stretch occupies residues 1733-1796 (TQCLQHPWLM…SGLSGRKSST (64 aa)). Ser1781, Ser1782, Ser1794, Ser1795, and Ser1798 each carry phosphoserine. Positions 1789-1809 (LSGRKSSTGSPTSPINAEKLE) are disordered. The segment covering 1792–1803 (RKSSTGSPTSPI) has biased composition (polar residues). At Thr1800 the chain carries Phosphothreonine. Residue Ser1801 is modified to Phosphoserine. Residues 1831 to 1920 (PYFSKTIRDL…GEATCTAELI (90 aa)) enclose the Ig-like C2-type 9 domain. An intrachain disulfide couples Cys1852 to Cys1904.

The protein belongs to the protein kinase superfamily. CAMK Ser/Thr protein kinase family. In terms of assembly, all isoforms including Telokin bind calmodulin. Interacts with CTTN; this interaction is reduced during thrombin-induced endothelial cell (EC) contraction but is promoted by the barrier-protective agonist sphingosine 1-phosphate (S1P) within lamellipodia. A complex made of ABL1, CTTN and MYLK regulates cortical actin-based cytoskeletal rearrangement critical to sphingosine 1-phosphate (S1P)-mediated endothelial cell (EC) barrier enhancement. Binds to NAA10/ARD1. Interacts with SVIL and PTK2B/PYK2. Mg(2+) is required as a cofactor. The cofactor is Ca(2+). In terms of processing, can probably be down-regulated by phosphorylation. Tyrosine phosphorylation by ABL1 increases kinase activity, reverses MLCK-mediated inhibition of Arp2/3-mediated actin polymerization, and enhances CTTN-binding. Phosphorylation by SRC at Tyr-452 promotes CTTN binding. The C-terminus is deglutamylated by AGTPBP1/CCP1, AGBL1/CCP4 and AGBL4/CCP6, leading to the formation of Myosin light chain kinase, smooth muscle, deglutamylated form. The consequences of C-terminal deglutamylation are unknown. In terms of tissue distribution, smooth muscle isoform is expressed in all tissues with highest levels in bladder, uterus, vas deferens, colon, ileum, and tracheae. Isoform 1 is expressed in lung, bladder, and vas deferens. Telokin is expressed in smooth muscle cells of the gut, reproductive tract and urinary tract, including in uterus, vas deferens, bladder, colon, kidney, ureter and ovary. Telokin is also detected in the trachea.

Its subcellular location is the cytoplasm. It localises to the cell projection. The protein resides in the lamellipodium. It is found in the cleavage furrow. The protein localises to the cytoskeleton. Its subcellular location is the stress fiber. It carries out the reaction L-seryl-[myosin light chain] + ATP = O-phospho-L-seryl-[myosin light chain] + ADP + H(+). The catalysed reaction is L-threonyl-[myosin light chain] + ATP = O-phospho-L-threonyl-[myosin light chain] + ADP + H(+). Calcium/calmodulin-dependent myosin light chain kinase implicated in smooth muscle contraction via phosphorylation of myosin light chains (MLC). Also regulates actin-myosin interaction through a non-kinase activity. Phosphorylates PTK2B/PYK2 and myosin light-chains. Involved in the inflammatory response (e.g. apoptosis, vascular permeability, leukocyte diapedesis), cell motility and morphology, airway hyperreactivity and other activities relevant to asthma. Required for tonic airway smooth muscle contraction that is necessary for physiological and asthmatic airway resistance. Necessary for gastrointestinal motility. Implicated in the regulation of endothelial as well as vascular permeability, probably via the regulation of cytoskeletal rearrangements. In the nervous system it has been shown to control the growth initiation of astrocytic processes in culture and to participate in transmitter release at synapses formed between cultured sympathetic ganglion cells. Critical participant in signaling sequences that result in fibroblast apoptosis. Plays a role in the regulation of epithelial cell survival. Required for epithelial wound healing, especially during actomyosin ring contraction during purse-string wound closure. Mediates RhoA-dependent membrane blebbing. Triggers TRPC5 channel activity in a calcium-dependent signaling, by inducing its subcellular localization at the plasma membrane. Promotes cell migration (including tumor cells) and tumor metastasis. PTK2B/PYK2 activation by phosphorylation mediates ITGB2 activation and is thus essential to trigger neutrophil transmigration during acute lung injury (ALI). May regulate optic nerve head astrocyte migration. Probably involved in mitotic cytoskeletal regulation. Regulates tight junction probably by modulating ZO-1 exchange in the perijunctional actomyosin ring. Mediates burn-induced microvascular barrier injury; triggers endothelial contraction in the development of microvascular hyperpermeability by phosphorylating MLC. Essential for intestinal barrier dysfunction. Mediates Giardia spp.-mediated reduced epithelial barrier function during giardiasis intestinal infection via reorganization of cytoskeletal F-actin and tight junctional ZO-1. Necessary for hypotonicity-induced Ca(2+) entry and subsequent activation of volume-sensitive organic osmolyte/anion channels (VSOAC) in cervical cancer cells. This chain is Myosin light chain kinase, smooth muscle, found in Mus musculus (Mouse).